The chain runs to 360 residues: Histidinol-phosphate aminotransferase (360 aa).

The residue at position 208 (Lys208) is an N6-(pyridoxal phosphate)lysine.

The protein belongs to the class-II pyridoxal-phosphate-dependent aminotransferase family. Histidinol-phosphate aminotransferase subfamily. Homodimer. The cofactor is pyridoxal 5'-phosphate.

The enzyme catalyses L-histidinol phosphate + 2-oxoglutarate = 3-(imidazol-4-yl)-2-oxopropyl phosphate + L-glutamate. It participates in amino-acid biosynthesis; L-histidine biosynthesis; L-histidine from 5-phospho-alpha-D-ribose 1-diphosphate: step 7/9. This is Histidinol-phosphate aminotransferase (hisC) from Lactococcus lactis subsp. lactis (strain IL1403) (Streptococcus lactis).